Reading from the N-terminus, the 367-residue chain is tRNA uridine(34) hydroxylase (367 aa).

The Rhodanese domain maps to 159–249 (EDKNSIVVDV…GIISYAHEIS (91 aa)). The Cysteine persulfide intermediate role is filled by Cys213.

Belongs to the TrhO family.

It carries out the reaction uridine(34) in tRNA + AH2 + O2 = 5-hydroxyuridine(34) in tRNA + A + H2O. Catalyzes oxygen-dependent 5-hydroxyuridine (ho5U) modification at position 34 in tRNAs. This is tRNA uridine(34) hydroxylase from Leptospira borgpetersenii serovar Hardjo-bovis (strain L550).